Here is a 73-residue protein sequence, read N- to C-terminus: Translation initiation factor IF-1 (73 aa).

Residues 1–72 (MSKKDVIELE…SRGRIVYRKK (72 aa)) enclose the S1-like domain.

It belongs to the IF-1 family. In terms of assembly, component of the 30S ribosomal translation pre-initiation complex which assembles on the 30S ribosome in the order IF-2 and IF-3, IF-1 and N-formylmethionyl-tRNA(fMet); mRNA recruitment can occur at any time during PIC assembly.

The protein localises to the cytoplasm. Functionally, one of the essential components for the initiation of protein synthesis. Stabilizes the binding of IF-2 and IF-3 on the 30S subunit to which N-formylmethionyl-tRNA(fMet) subsequently binds. Helps modulate mRNA selection, yielding the 30S pre-initiation complex (PIC). Upon addition of the 50S ribosomal subunit IF-1, IF-2 and IF-3 are released leaving the mature 70S translation initiation complex. The chain is Translation initiation factor IF-1 from Fusobacterium nucleatum subsp. nucleatum (strain ATCC 25586 / DSM 15643 / BCRC 10681 / CIP 101130 / JCM 8532 / KCTC 2640 / LMG 13131 / VPI 4355).